The primary structure comprises 189 residues: MyoD family inhibitor domain-containing protein 2 (189 aa).

In terms of domain architecture, MDFI spans 28–188 (KEDTQLTNAK…LAMEISEICY (161 aa)).

This sequence belongs to the MDFI family.

This Homo sapiens (Human) protein is MyoD family inhibitor domain-containing protein 2.